Reading from the N-terminus, the 651-residue chain is MPTESRSILARAEETRCRHLSRLLRAGLVFLLCDVLTSCLATPELQNTVIRSSKAHHLQLLFSSRSTPAVKFPLDATLSAPNSFGEQEARSVEAVKQNPWATTTAFADFMKRFNIPQVHGSGIFVDLGRDTEGYREVGGKCPVFGKAIQMHQPAEYSNNFLDDAPTSNDASKKPLPGGFNNPQVYTSGQKFSPIDDSLLQERLGTAGPKTAIGRCALYAYSTIAVNPSTNYTSTYKYPFVYDAVSRKCYVLSVSAQLLKGEKYCSVNGTPSGLTWACFEPVKEKSSARALVYGSAFVAEGNPDAWQSACPNDAVKDALFGKWEDGQCVPFDTKTSVQSDQATNKEECWKRVFANPLVASDAPTTYPEAAQKNWNDFWPVHEQSSPKSGGFGANWANFYLEKESGETICAIFDQVPDCFAPITGAVAYTALGSSTEVNLPQCDSASFIPIEGPCNNCVQVVTECVGNQFDQTSKACCTEPEIIPPVKPPVEPPVEPPVEPPVEPPVEPPVEPPVEPPVEPPVEPPVVEPPTEPSVPEPEPPVVLPPTPGEGGGGGTSGDETVEKEGSGGNTALIAGSVLGMLIILALVGTCVGFYYRKRPLPPTERPTVEASGGREVEGPSDVAVPPDHSWWGEGEHETESLLGSRAVDAEF.

A signal peptide spans 1 to 41 (MPTESRSILARAEETRCRHLSRLLRAGLVFLLCDVLTSCLA). The propeptide at 42–81 (TPELQNTVIRSSKAHHLQLLFSSRSTPAVKFPLDATLSAP) is removed in mature form. Residues 42–570 (TPELQNTVIR…VEKEGSGGNT (529 aa)) lie on the Extracellular side of the membrane. 7 cysteine pairs are disulfide-bonded: Cys141-Cys309, Cys215-Cys248, Cys264-Cys277, Cys327-Cys417, Cys347-Cys408, Cys441-Cys463, and Cys453-Cys475. Asn230 is a glycosylation site (N-linked (GlcNAc...) asparagine). A 1; approximate repeat occupies 483-486 (PPVK). The tract at residues 483-531 (PPVKPPVEPPVEPPVEPPVEPPVEPPVEPPVEPPVEPPVEPPVVEPPTE) is 12 x 4 AA approximate tandem-repeats of P-P-V-E. The span at 483–547 (PPVKPPVEPP…EPPVVLPPTP (65 aa)) shows a compositional bias: pro residues. The disordered stretch occupies residues 483-567 (PPVKPPVEPP…DETVEKEGSG (85 aa)). 9 repeat units span residues 487–490 (PPVE), 491–494 (PPVE), 495–498 (PPVE), 499–502 (PPVE), 503–506 (PPVE), 507–510 (PPVE), 511–514 (PPVE), 515–518 (PPVE), and 519–522 (PPVE). The 11; approximate repeat unit spans residues 523 to 527 (PPVVE). The stretch at 528 to 531 (PPTE) is one 12; approximate repeat. A helical transmembrane segment spans residues 571–591 (ALIAGSVLGMLIILALVGTCV). The Cytoplasmic segment spans residues 592-651 (GFYYRKRPLPPTERPTVEASGGREVEGPSDVAVPPDHSWWGEGEHETESLLGSRAVDAEF). Positions 598 to 651 (RPLPPTERPTVEASGGREVEGPSDVAVPPDHSWWGEGEHETESLLGSRAVDAEF) are disordered.

This sequence belongs to the apicomplexan parasites AMA1 family. In terms of processing, proteolytically cleaved within its transmembrane domain, releasing a soluble form from the cell surface.

It localises to the cell membrane. The protein resides in the secreted. May play a role in host cell invasion. The polypeptide is Apical membrane antigen 1-like protein (Toxoplasma gondii (strain ATCC 50861 / VEG)).